The primary structure comprises 314 residues: Olfactory receptor 6C6 (314 aa).

Over 1 to 24 the chain is Extracellular; the sequence is MKNKSMEIEFILLGLTDDPQLQIV. An N-linked (GlcNAc...) asparagine glycan is attached at N3. The helical transmembrane segment at 25–45 threads the bilayer; sequence IFLFLFLNYTLSLMGNLIIII. Topologically, residues 46–63 are cytoplasmic; it reads LTLLDPRLKTPMYFFLRN. The helical transmembrane segment at 64–84 threads the bilayer; it reads FSFLEVIFTTVCIPRFLITIV. Over 85–95 the chain is Extracellular; it reads TRDKTISYNNC. C95 and C177 are oxidised to a cystine. Residues 96-116 traverse the membrane as a helical segment; it reads ATQLFFILLPGVTEFYLLAAM. Topologically, residues 117–141 are cytoplasmic; it reads SYDRYVAICKPLHYPIIMSSKVCYQ. Residues 142–162 form a helical membrane-spanning segment; the sequence is LVLSSWVTGFLIIFPPLVMGL. Residues 163-199 lie on the Extracellular side of the membrane; the sequence is KLDFCASKTIDHFMCETSPILQISCTDTHVLELMSFT. The helical transmembrane segment at 200–220 threads the bilayer; it reads LAVVTLVVTLVLVILSYTCII. Residues 221–237 are Cytoplasmic-facing; sequence KTILKFSSAQQRNKAFS. A helical transmembrane segment spans residues 238-258; it reads TCTSHMIVVSMTYGSCIFMYI. Over 259-269 the chain is Extracellular; that stretch reads KPSAKERVTVS. The chain crosses the membrane as a helical span at residues 270-290; sequence KGVALLYTSIAPLLNPFIYTL. At 291-314 the chain is on the cytoplasmic side; it reads RNQQVKEVFWDVLQKNLCFSKRPF.

It belongs to the G-protein coupled receptor 1 family.

It is found in the cell membrane. Its function is as follows. Odorant receptor. The polypeptide is Olfactory receptor 6C6 (OR6C6) (Homo sapiens (Human)).